A 350-amino-acid polypeptide reads, in one-letter code: Uroporphyrinogen decarboxylase (350 aa).

Residues 27 to 31 (RQAGR), Phe-46, Asp-76, Tyr-152, Ser-207, and His-321 each bind substrate.

Belongs to the uroporphyrinogen decarboxylase family. In terms of assembly, homodimer.

It localises to the cytoplasm. The enzyme catalyses uroporphyrinogen III + 4 H(+) = coproporphyrinogen III + 4 CO2. It functions in the pathway porphyrin-containing compound metabolism; protoporphyrin-IX biosynthesis; coproporphyrinogen-III from 5-aminolevulinate: step 4/4. Its function is as follows. Catalyzes the decarboxylation of four acetate groups of uroporphyrinogen-III to yield coproporphyrinogen-III. This Listeria welshimeri serovar 6b (strain ATCC 35897 / DSM 20650 / CCUG 15529 / CIP 8149 / NCTC 11857 / SLCC 5334 / V8) protein is Uroporphyrinogen decarboxylase.